A 180-amino-acid chain; its full sequence is V-type proton ATPase subunit c''1 (180 aa).

Over Met-1–Ser-26 the chain is Lumenal. A helical transmembrane segment spans residues Ala-27–Ile-47. Over Thr-48–Asn-66 the chain is Cytoplasmic. The chain crosses the membrane as a helical span at residues Leu-67–Leu-87. The Lumenal segment spans residues Gln-88–Ala-110. The helical transmembrane segment at Ile-111 to Ile-131 threads the bilayer. Residues Ile-132–Lys-149 lie on the Cytoplasmic side of the membrane. The chain crosses the membrane as a helical span at residues Ile-150–Ile-170. At Met-171–Lys-180 the chain is on the lumenal side.

This sequence belongs to the V-ATPase proteolipid subunit family. V-ATPase is a heteromultimeric enzyme composed of a peripheral catalytic V1 complex (components A to H) attached to an integral membrane V0 proton pore complex (components: a, c, c'', d and e). The proteolipid components c and c'' are present as a hexameric ring that forms the proton-conducting pore. Preferentially expressed in roots.

The protein localises to the endoplasmic reticulum membrane. It localises to the golgi apparatus membrane. Its function is as follows. Proton-conducting pore forming subunit of the membrane integral V0 complex of vacuolar ATPase. V-ATPase is responsible for acidifying a variety of intracellular compartments in eukaryotic cells. This Arabidopsis thaliana (Mouse-ear cress) protein is V-type proton ATPase subunit c''1 (VHA-c''1).